Here is a 321-residue protein sequence, read N- to C-terminus: Acetyl-coenzyme A carboxylase carboxyl transferase subunit alpha (321 aa).

Residues 39 to 293 (RLQQKSQTLA…RRALGDSLRQ (255 aa)) form the CoA carboxyltransferase C-terminal domain.

The protein belongs to the AccA family. As to quaternary structure, acetyl-CoA carboxylase is a heterohexamer composed of biotin carboxyl carrier protein (AccB), biotin carboxylase (AccC) and two subunits each of ACCase subunit alpha (AccA) and ACCase subunit beta (AccD).

The protein resides in the cytoplasm. It catalyses the reaction N(6)-carboxybiotinyl-L-lysyl-[protein] + acetyl-CoA = N(6)-biotinyl-L-lysyl-[protein] + malonyl-CoA. It functions in the pathway lipid metabolism; malonyl-CoA biosynthesis; malonyl-CoA from acetyl-CoA: step 1/1. In terms of biological role, component of the acetyl coenzyme A carboxylase (ACC) complex. First, biotin carboxylase catalyzes the carboxylation of biotin on its carrier protein (BCCP) and then the CO(2) group is transferred by the carboxyltransferase to acetyl-CoA to form malonyl-CoA. The chain is Acetyl-coenzyme A carboxylase carboxyl transferase subunit alpha from Bordetella avium (strain 197N).